Consider the following 648-residue polypeptide: Transcription initiation factor TFIID subunit 5 (648 aa).

The span at 1-13 (MDSENSSSHSISS) shows a compositional bias: low complexity. The interval 1–21 (MDSENSSSHSISSPQMFQNTH) is disordered. The region spanning 35-67 (MNNESLQMIIGYLRRNGLTETEELLTREAGPVL) is the LisH domain. WD repeat units lie at residues 317 to 358 (NAPI…KKLR), 392 to 431 (GHGG…NAVI), 433 to 472 (RTPA…PLRI), 475 to 514 (DPYG…RVRI), 517 to 556 (GHKA…LVAA), and 560 to 599 (EQAG…GTVL).

It belongs to the WD repeat TAF5 family. As to quaternary structure, component of the TFIID basal transcription factor complex, composed of TATA-box-binding protein tbp-1, and a number of TBP-associated factors (TAFs).

It localises to the nucleus. Functionally, the TFIID basal transcription factor complex plays a major role in the initiation of RNA polymerase II (Pol II)-dependent transcription. TFIID recognizes and binds promoters via its subunit tbp-1, a TATA-box-binding protein, and promotes assembly of the pre-initiation complex (PIC). The TFIID complex consists of tbp-1 and TBP-associated factors (TAFs), including taf-5. Essential for early embryonic development, but not required for transcription of some genes; probably acts via activating transcription initiation by RNA Pol II, as part of the TFIID complex. The chain is Transcription initiation factor TFIID subunit 5 from Caenorhabditis elegans.